A 265-amino-acid polypeptide reads, in one-letter code: Deoxycytidine kinase 1 (265 aa).

30–38 is a binding site for ATP; that stretch reads GNIAAGKST. Glu55, Tyr88, and Gln99 together coordinate substrate. The active-site Proton acceptor is Glu129. Arg130 and Asp135 together coordinate substrate. Residue 190-194 coordinates ATP; sequence RVYTR. A substrate-binding site is contributed by Glu199. 242-244 provides a ligand contact to ATP; that stretch reads EDF.

It belongs to the DCK/DGK family. As to quaternary structure, homodimer.

The protein resides in the nucleus. The catalysed reaction is 2'-deoxycytidine + a ribonucleoside 5'-triphosphate = dCMP + a ribonucleoside 5'-diphosphate + H(+). It catalyses the reaction 2'-deoxyguanosine + ATP = dGMP + ADP + H(+). The enzyme catalyses 2'-deoxyadenosine + ATP = dAMP + ADP + H(+). Its function is as follows. Phosphorylates the deoxyribonucleosides deoxyadenosine, deoxycytidine and deoxyguanosine with highest activity against deoxycytidine followed by deadenosine and deoxyguanosine. Shows only very minor activity against deoxyuridine and deoxythymidine. The polypeptide is Deoxycytidine kinase 1 (Xenopus laevis (African clawed frog)).